A 1351-amino-acid polypeptide reads, in one-letter code: MQSQVRLPSNGNPALSFPQNEIGGPVHWKTYLEGCSPCSFPSLRTVCPSQSWPASVSITIGDSIFRRLEHFSDKTGISVATVFRASWGLVLRIYTGQDSVCFGDMTTAPGGIDAIGCVGVCRVELSDTAVISKVLQRIQAASANKLAIPHVPLSDAVLSKCMPSASLFNTCMLISGGGERPEKTSSTFEKVELGYDDQYDIIVRGSVEDSGASAALSYRTSFLSEEQATSIANTFERAVSDLIGIENRIGQICFLSDLDKSQIYTWNKDPPLRAHSCVDTLIHERCLSQPTASAVNAWDGELSYEELNHLSSKLSRHLVTLGVGAEVFVPLCFEKSRWTTVAMLAVIKAGGAFVLLDPSHPAERLLSICQKVSARLIVASAQHAKLAEDLVTSIVEVGDDKADWLTDKGIKAQTQTRTRRSAAPGDALYAVFTSGSTGTPKGVIIEHGSFHAAVFPYTEAVGLNQESRVFQFSSYAFDVTIFDTLMTLISGGCVCVPSNTERWSDVANAIQRFRVTHSSLTPTVARILDPKDVLTLRTLVLGGEKLVTSDITKWVDQVRLVHLYGASECPIMSIQSMTGVASDFQTTDHATGSNCWIVDPNNHDRLVPIGTIGELVIEGTIVGRGYLDDPEKSSATFIRPPGWLCQVRGSGYHSAVYKSGDLVQYTADGSLRYIGRKDTQVKLRGQRVELGEVEHHVKLTFPNATDVVVELVVTIHASSSRAPILVAFVLISHEADPDPESIRTGRGEGLSQILSEPTDRFCSQIPIVQSQLQQSLPSYMVPGIFLPLMTLPLTSTDKINRKLLRELAGALSREELESYQPSTGPVRAPQTTTEKLLQQYFARVLNIPVEQVGADDHFFQRGGDSLTAMKLVAMARKDKHKLTVQDIFDSPRLSALACVVRSGKVDGNKEPPLEPFSLVNKHRDIIRAAAQQCQLPVRVIEDVYPCTPLQRGLISETLRDSKAFIAHLAVSLPPDIDLQRLQEAWTTVANANPILRTRMVLSASHGLLQVVVREDIRWIVSKNAEAQDFFVGVGKPLVQLVLCCHREGNEVPVQLLLMVHHAVYDGYTLPLIFEQVKAAYNGGTLAPRPAVPFIRYVQSIPDGTGYWNSLMANLQTPIFPALPSKSYQPLPNAIMRHTIITPGSHRQYTPSTYVRLAWAITQAYHQGTCDIFFGTVVSGRNAPVTDIELMTIPTVATIPCRVTLDFQSLVQSALRKIQDDAISGIPFEQLGLPHIRRLGEHAMLACSFQTLLSIQPALPPSTDAWFEQPGSTIDYRANATYAINLFFGLEGDKLKATALYDFNVVKKDKMQSMLVDFGNILQTMHKSPNSLIRDILAVPQQMRGPINSASL.

The segment at 285–684 is adenylation (A) domain; the sequence is RCLSQPTASA…GRKDTQVKLR (400 aa). Positions 828 to 904 constitute a Carrier domain; that stretch reads APQTTTEKLL…ALACVVRSGK (77 aa). Serine 865 carries the post-translational modification O-(pantetheine 4'-phosphoryl)serine. Residues 941 to 1340 form a condensation (C) domain region; sequence EDVYPCTPLQ…LIRDILAVPQ (400 aa).

It belongs to the NRP synthetase family.

It functions in the pathway alkaloid biosynthesis; ergot alkaloid biosynthesis. Its function is as follows. D-lysergyl-peptide-synthetase subunit 2; part of the gene cluster that mediates the biosynthesis of fungal ergot alkaloid ergovaline, the predominant ergopeptine product in E.festucae var. lolii. DmaW catalyzes the first step of ergot alkaloid biosynthesis by condensing dimethylallyl diphosphate (DMAP) and tryptophan to form 4-dimethylallyl-L-tryptophan. The second step is catalyzed by the methyltransferase easF that methylates 4-dimethylallyl-L-tryptophan in the presence of S-adenosyl-L-methionine, resulting in the formation of 4-dimethylallyl-L-abrine. The catalase easC and the FAD-dependent oxidoreductase easE then transform 4-dimethylallyl-L-abrine to chanoclavine-I which is further oxidized by easD in the presence of NAD(+), resulting in the formation of chanoclavine-I aldehyde. Agroclavine dehydrogenase easG then mediates the conversion of chanoclavine-I aldehyde to agroclavine via a non-enzymatic adduct reaction: the substrate is an iminium intermediate that is formed spontaneously from chanoclavine-I aldehyde in the presence of glutathione. The presence of easA is not required to complete this reaction. Further conversion of agroclavine to paspalic acid is a two-step process involving oxidation of agroclavine to elymoclavine and of elymoclavine to paspalic acid, the second step being performed by the elymoclavine oxidase cloA. Paspalic acid is then further converted to D-lysergic acid. Ergovaline is assembled from D-lysergic acid and three different amino acids by the D-lysergyl-peptide-synthetase composed of a monomudular (lpsB) and a trimodular (lpsA) nonribosomal peptide synthetase subunit. The polypeptide is D-lysergyl-peptide-synthetase subunit 2 (Epichloe festucae var. lolii (Neotyphodium lolii)).